The chain runs to 323 residues: Peroxisomal and mitochondrial division factor 2 (323 aa).

Disordered regions lie at residues 1-55 (MAEE…NDAI), 73-92 (ESKA…KSDE), and 120-143 (TART…SQKG). Over 1–297 (MAEERSLNGE…WSPNVTAVGS (297 aa)) the chain is Cytoplasmic. Over residues 13–26 (GQDDESFFDSDQQG) the composition is skewed to acidic residues. Residues 28 to 278 (DGKSTELNQK…INGLKNVVEE (251 aa)) adopt a coiled-coil conformation. Residues 298 to 318 (GGAVAAVAVAVAGAAVVCYIY) form a helical membrane-spanning segment. Residues 319-323 (HSRRV) lie on the Mitochondrial intermembrane side of the membrane.

As to quaternary structure, homodimer. Interacts with PMD1.

The protein localises to the mitochondrion outer membrane. Its function is as follows. Involved in morphogenesis and proliferation of mitochondria. Does not act redundantly with PMD1. Is not involved in peroxisomal proliferation. This is Peroxisomal and mitochondrial division factor 2 from Arabidopsis thaliana (Mouse-ear cress).